The following is a 284-amino-acid chain: tRNA pseudouridine synthase A (284 aa).

Catalysis depends on aspartate 62, which acts as the Nucleophile. Tyrosine 120 lines the substrate pocket.

This sequence belongs to the tRNA pseudouridine synthase TruA family. In terms of assembly, homodimer.

The catalysed reaction is uridine(38/39/40) in tRNA = pseudouridine(38/39/40) in tRNA. Its function is as follows. Formation of pseudouridine at positions 38, 39 and 40 in the anticodon stem and loop of transfer RNAs. The polypeptide is tRNA pseudouridine synthase A (Thermosynechococcus vestitus (strain NIES-2133 / IAM M-273 / BP-1)).